Reading from the N-terminus, the 619-residue chain is Chaperone protein DnaK (619 aa).

Thr-175 bears the Phosphothreonine; by autocatalysis mark. Residues 578–619 (NGGAQGEGFDPNNMGGANAGTGAANSNDDNVVDADFEVQDDK) are disordered. Over residues 589–606 (NNMGGANAGTGAANSNDD) the composition is skewed to low complexity. The span at 607-619 (NVVDADFEVQDDK) shows a compositional bias: acidic residues.

Belongs to the heat shock protein 70 family.

Its function is as follows. Acts as a chaperone. The polypeptide is Chaperone protein DnaK (Clostridium perfringens (strain SM101 / Type A)).